A 718-amino-acid chain; its full sequence is Phenylalanine--tRNA ligase beta subunit (718 aa).

Residues 40-153 (FLNVSKIKFG…KADLKQDPID (114 aa)) form the tRNA-binding domain. Residues 387-462 (DKKESFNFVW…RFYGYENLVF (76 aa)) form the B5 domain. Residues Asp-440, Asp-446, Glu-449, and Glu-450 each contribute to the Mg(2+) site.

The protein belongs to the phenylalanyl-tRNA synthetase beta subunit family. Type 1 subfamily. In terms of assembly, tetramer of two alpha and two beta subunits. Requires Mg(2+) as cofactor.

The protein localises to the cytoplasm. The catalysed reaction is tRNA(Phe) + L-phenylalanine + ATP = L-phenylalanyl-tRNA(Phe) + AMP + diphosphate + H(+). The polypeptide is Phenylalanine--tRNA ligase beta subunit (Mycoplasmopsis pulmonis (strain UAB CTIP) (Mycoplasma pulmonis)).